The following is a 104-amino-acid chain: Large ribosomal subunit protein uL24 (104 aa).

Over residues Arg-82–Lys-92 the composition is skewed to basic and acidic residues. Residues Arg-82 to Ile-104 form a disordered region. Positions Arg-93–Ile-104 are enriched in basic residues.

This sequence belongs to the universal ribosomal protein uL24 family. Part of the 50S ribosomal subunit.

Its function is as follows. One of two assembly initiator proteins, it binds directly to the 5'-end of the 23S rRNA, where it nucleates assembly of the 50S subunit. In terms of biological role, one of the proteins that surrounds the polypeptide exit tunnel on the outside of the subunit. The chain is Large ribosomal subunit protein uL24 from Nocardia farcinica (strain IFM 10152).